The following is a 399-amino-acid chain: Tryptophan synthase beta chain (399 aa).

Residue lysine 92 is modified to N6-(pyridoxal phosphate)lysine.

It belongs to the TrpB family. Tetramer of two alpha and two beta chains. Pyridoxal 5'-phosphate serves as cofactor.

It carries out the reaction (1S,2R)-1-C-(indol-3-yl)glycerol 3-phosphate + L-serine = D-glyceraldehyde 3-phosphate + L-tryptophan + H2O. Its pathway is amino-acid biosynthesis; L-tryptophan biosynthesis; L-tryptophan from chorismate: step 5/5. In terms of biological role, the beta subunit is responsible for the synthesis of L-tryptophan from indole and L-serine. This chain is Tryptophan synthase beta chain, found in Bordetella bronchiseptica (strain ATCC BAA-588 / NCTC 13252 / RB50) (Alcaligenes bronchisepticus).